We begin with the raw amino-acid sequence, 412 residues long: Polyferredoxin protein MvhB (412 aa).

12 consecutive 4Fe-4S ferredoxin-type domains span residues 2-29 (IVIN…VKPE), 30-57 (DVIY…HEDI), 66-95 (KKIT…LVND), 96-127 (GKAS…IEGV), 138-166 (DKPI…LPKY), 168-197 (ESIE…ISGK), 207-236 (ENFT…PKSD), 237-265 (LTVS…LEVK), 275-304 (EGIV…VVSP), 311-344 (GLKK…LVEV), 356-385 (NRIQ…LTDD), and 386-412 (EKLP…LLIK). [4Fe-4S] cluster is bound by residues cysteine 9, cysteine 12, cysteine 15, and cysteine 19. Positions 75, 78, 81, 85, 107, 110, 113, 117, 146, 149, 152, 156, 177, 180, 183, 187, 216, 219, 222, 226, 245, 248, 251, 255, 284, 287, 290, 294, 324, 327, 330, 334, 365, 368, 371, and 375 each coordinate [4Fe-4S] cluster.

[4Fe-4S] cluster is required as a cofactor.

The sequence is that of Polyferredoxin protein MvhB (mvhB) from Methanothermus fervidus.